The sequence spans 362 residues: Zinc transporter 9 (362 aa).

The N-terminal stretch at 1–21 is a signal peptide; sequence MAFDLKLTACLLLAVFSLAAA. The Extracellular segment spans residues 22–42; sequence ADCECQPSDEGHDAAKSRTLK. The helical transmembrane segment at 43–63 threads the bilayer; sequence VIAIFCILVGSSAGCAIPSLG. Over 64–74 the chain is Cytoplasmic; sequence RRFPALRPDTS. The chain crosses the membrane as a helical span at residues 75 to 95; the sequence is LFFALKAFAAGVILATAFVHI. The Extracellular portion of the chain corresponds to 96–120; that stretch reads LPVSFDKLGSPCLVDGPWRKYPFTG. The chain crosses the membrane as a helical span at residues 121-141; the sequence is LVAMLAAVATLLLDTIATGYF. The Cytoplasmic portion of the chain corresponds to 142-207; that stretch reads LQRAQDSRGA…EDRAKLVRHR (66 aa). A helical transmembrane segment spans residues 208-228; the sequence is VISQVFELGIIVHSIIIGISL. The Extracellular portion of the chain corresponds to 229-239; it reads GASESPSTIRP. A helical transmembrane segment spans residues 240–260; the sequence is LVAALTFHQFFEGIGLGGCIV. Over 261 to 269 the chain is Cytoplasmic; sequence QARFHLKSA. Residues 270 to 290 form a helical membrane-spanning segment; the sequence is VTMAIFFSLTTPVGIMIGIGI. Residues 291–301 lie on the Extracellular side of the membrane; it reads SSAYNENSPTA. Residues 302-322 form a helical membrane-spanning segment; it reads LIVEGILDAAAAGILNYMALV. At 323–341 the chain is on the cytoplasmic side; it reads DLLAEDFMNPRVRKSGRLQ. A helical membrane pass occupies residues 342-362; the sequence is LIISILLLVGIALMSLLGIWA.

It belongs to the ZIP transporter (TC 2.A.5) family.

It localises to the cell membrane. Functionally, zinc transporter that may be involved in zinc uptake from the rhizosphere. This Oryza sativa subsp. japonica (Rice) protein is Zinc transporter 9 (ZIP9).